The following is a 558-amino-acid chain: NAD(P)H-quinone oxidoreductase chain 4 (558 aa).

A run of 14 helical transmembrane segments spans residues 25 to 45, 56 to 76, 111 to 131, 133 to 153, 157 to 177, 189 to 209, 230 to 250, 264 to 284, 298 to 318, 327 to 347, 353 to 373, 395 to 417, 438 to 458, and 485 to 505; these read FPWL…VPFI, WYAL…YLKG, LILL…PVSF, PKLF…VFAV, LLFF…LAIW, FIIY…AMGF, GFQL…LPVV, TAPV…YALL, FAPL…LTSF, IAYS…SFSS, AMLQ…LVGA, IMFA…SGFV, IVIA…LLSM, and IYVI…PRIM.

This sequence belongs to the complex I subunit 4 family.

It localises to the cellular thylakoid membrane. It carries out the reaction a plastoquinone + NADH + (n+1) H(+)(in) = a plastoquinol + NAD(+) + n H(+)(out). It catalyses the reaction a plastoquinone + NADPH + (n+1) H(+)(in) = a plastoquinol + NADP(+) + n H(+)(out). Functionally, NDH-1 shuttles electrons from NAD(P)H, via FMN and iron-sulfur (Fe-S) centers, to quinones in the respiratory chain. The immediate electron acceptor for the enzyme in this species is believed to be plastoquinone. Couples the redox reaction to proton translocation (for every two electrons transferred, four hydrogen ions are translocated across the cytoplasmic membrane), and thus conserves the redox energy in a proton gradient. The sequence is that of NAD(P)H-quinone oxidoreductase chain 4 from Prochlorococcus marinus (strain MIT 9211).